Reading from the N-terminus, the 386-residue chain is 1-deoxy-D-xylulose 5-phosphate reductoisomerase (386 aa).

NADPH is bound by residues Thr10, Gly11, Ser12, Ile13, Gly36, Asn38, and Asn122. Lys123 is a 1-deoxy-D-xylulose 5-phosphate binding site. Glu124 provides a ligand contact to NADPH. Position 148 (Asp148) interacts with Mn(2+). 1-deoxy-D-xylulose 5-phosphate contacts are provided by Ser149, Glu150, Ser174, and His197. Glu150 provides a ligand contact to Mn(2+). Gly203 provides a ligand contact to NADPH. 1-deoxy-D-xylulose 5-phosphate-binding residues include Ser210, Asn215, Lys216, and Glu219. Glu219 is a Mn(2+) binding site.

Belongs to the DXR family. The cofactor is Mg(2+). Requires Mn(2+) as cofactor.

The enzyme catalyses 2-C-methyl-D-erythritol 4-phosphate + NADP(+) = 1-deoxy-D-xylulose 5-phosphate + NADPH + H(+). The protein operates within isoprenoid biosynthesis; isopentenyl diphosphate biosynthesis via DXP pathway; isopentenyl diphosphate from 1-deoxy-D-xylulose 5-phosphate: step 1/6. Catalyzes the NADPH-dependent rearrangement and reduction of 1-deoxy-D-xylulose-5-phosphate (DXP) to 2-C-methyl-D-erythritol 4-phosphate (MEP). This chain is 1-deoxy-D-xylulose 5-phosphate reductoisomerase, found in Geotalea uraniireducens (strain Rf4) (Geobacter uraniireducens).